The primary structure comprises 94 residues: Viral macrophage inflammatory protein 2 (94 aa).

The N-terminal stretch at 1 to 20 (MDTKGILLVAVLTALLCLQS) is a signal peptide. Cystine bridges form between C34–C58 and C35–C74.

It belongs to the intercrine beta (chemokine CC) family. Monomer. Interacts with human chemokine receptor CXCR4.

Its subcellular location is the secreted. Its function is as follows. Blocks infection by several different human immunodeficiency virus type 1 (HIV-1) strains. This occurs because vMIP-II binds to a wide range of chemokine receptors. May form part of the response to host defenses contributing to virus-induced neoplasia and may have relevance to KSHV and HIV-I interactions. The sequence is that of Viral macrophage inflammatory protein 2 (ORF K4) from Human herpesvirus 8 type P (isolate GK18) (HHV-8).